A 370-amino-acid polypeptide reads, in one-letter code: 2-Hydroxyacid oxidase 1 (370 aa).

Residues 1 to 365 (MLPRLVCISD…DKTLVRKNPL (365 aa)) enclose the FMN hydroxy acid dehydrogenase domain. Y26 provides a ligand contact to glyoxylate. Residues 79 to 81 (ATA), S108, and Q130 each bind FMN. Y132 provides a ligand contact to glyoxylate. Residue T158 participates in FMN binding. R167 serves as a coordination point for glyoxylate. The residue at position 184 (K184) is an N6-succinyllysine. A phosphoserine mark is found at S194 and S230. Residues K236 and S258 each contribute to the FMN site. The glyoxylate site is built by H260 and R263. The Proton acceptor role is filled by H260. FMN contacts are provided by residues 291 to 295 (DGGVR) and 314 to 315 (GR). The Microbody targeting signal signature appears at 368–370 (SKI).

The protein belongs to the FMN-dependent alpha-hydroxy acid dehydrogenase family. As to quaternary structure, homotetramer. FMN serves as cofactor. As to expression, liver.

It is found in the peroxisome matrix. The enzyme catalyses a (2S)-2-hydroxycarboxylate + O2 = a 2-oxocarboxylate + H2O2. It carries out the reaction glycolate + O2 = glyoxylate + H2O2. The catalysed reaction is glyoxylate + O2 + H2O = oxalate + H2O2 + H(+). It catalyses the reaction 2-hydroxyhexadecanoate + O2 = 2-oxohexadecanoate + H2O2. The enzyme catalyses 2-hydroxyoctanoate + O2 = 2-oxooctanoate + H2O2. It participates in amino-acid biosynthesis; glycine biosynthesis. Functionally, broad substrate specificity (S)-2-hydroxy-acid oxidase that preferentially oxidizes glycolate. The glyoxylate produced by the oxidation of glycolate can then be utilized by alanine-glyoxylate aminotransferase for the peroxisomal synthesis of glycine; this pathway appears to be an important step for the detoxification of glyoxylate which, if allowed to accumulate, may be metabolized to oxalate with formation of kidney stones. Can also catalyze the oxidation glyoxylate, and long chain hydroxyacids such as 2-hydroxyhexadecanoate and 2-hydroxyoctanoate. Active in vitro with the artificial electron acceptor 2,6-dichlorophenolindophenol (DCIP), but O2 is believed to be the physiological electron acceptor, leading to the production of H2O2. The polypeptide is 2-Hydroxyacid oxidase 1 (Mus musculus (Mouse)).